A 57-amino-acid polypeptide reads, in one-letter code: Large ribosomal subunit protein eL20 (57 aa).

The protein belongs to the eukaryotic ribosomal protein eL20 family. Part of the 50S ribosomal subunit. Binds 23S rRNA.

The chain is Large ribosomal subunit protein eL20 from Halorhabdus utahensis (strain DSM 12940 / JCM 11049 / AX-2).